The chain runs to 68 residues: Bacteriocin lactococcin-B (68 aa).

A propeptide spanning residues 1–21 (MKNQLNFNIVSDEELAEVNGG) is cleaved from the precursor.

It localises to the secreted. Kills Lactococci by dissipating the membrane potential of the cells. In Lactococcus lactis subsp. cremoris (Streptococcus cremoris), this protein is Bacteriocin lactococcin-B (lcnB).